The chain runs to 368 residues: 3-dehydroquinate synthase (368 aa).

NAD(+) is bound by residues 71–76, 105–109, 129–130, Lys142, Lys151, and 169–172; these read DGESFK, GVIGD, TT, and TLRT. Residues Glu184, His247, and His264 each contribute to the Zn(2+) site.

This sequence belongs to the sugar phosphate cyclases superfamily. Dehydroquinate synthase family. Co(2+) is required as a cofactor. Requires Zn(2+) as cofactor. NAD(+) serves as cofactor.

It localises to the cytoplasm. It carries out the reaction 7-phospho-2-dehydro-3-deoxy-D-arabino-heptonate = 3-dehydroquinate + phosphate. Its pathway is metabolic intermediate biosynthesis; chorismate biosynthesis; chorismate from D-erythrose 4-phosphate and phosphoenolpyruvate: step 2/7. Functionally, catalyzes the conversion of 3-deoxy-D-arabino-heptulosonate 7-phosphate (DAHP) to dehydroquinate (DHQ). This Ralstonia pickettii (strain 12J) protein is 3-dehydroquinate synthase.